Here is a 441-residue protein sequence, read N- to C-terminus: Proline--tRNA ligase (441 aa).

Belongs to the class-II aminoacyl-tRNA synthetase family. ProS type 2 subfamily. In terms of assembly, homodimer.

The protein localises to the cytoplasm. It catalyses the reaction tRNA(Pro) + L-proline + ATP = L-prolyl-tRNA(Pro) + AMP + diphosphate. In terms of biological role, catalyzes the attachment of proline to tRNA(Pro) in a two-step reaction: proline is first activated by ATP to form Pro-AMP and then transferred to the acceptor end of tRNA(Pro). In Methylorubrum populi (strain ATCC BAA-705 / NCIMB 13946 / BJ001) (Methylobacterium populi), this protein is Proline--tRNA ligase.